Consider the following 511-residue polypeptide: Membrane-bound lytic murein transglycosylase F (511 aa).

Residues 1–19 (MKKLKINYLLIGIVTLLLA) form the signal peptide. The tract at residues 20–269 (AALWPSIPWS…RLEEKYLGHG (250 aa)) is non-LT domain. The interval 270–511 (NDFDYVDTRT…ARMKLPGHLY (242 aa)) is LT domain. Glu314 is a catalytic residue.

This sequence in the N-terminal section; belongs to the bacterial solute-binding protein 3 family. It in the C-terminal section; belongs to the transglycosylase Slt family.

Its subcellular location is the cell outer membrane. It carries out the reaction Exolytic cleavage of the (1-&gt;4)-beta-glycosidic linkage between N-acetylmuramic acid (MurNAc) and N-acetylglucosamine (GlcNAc) residues in peptidoglycan, from either the reducing or the non-reducing ends of the peptidoglycan chains, with concomitant formation of a 1,6-anhydrobond in the MurNAc residue.. Functionally, murein-degrading enzyme that degrades murein glycan strands and insoluble, high-molecular weight murein sacculi, with the concomitant formation of a 1,6-anhydromuramoyl product. Lytic transglycosylases (LTs) play an integral role in the metabolism of the peptidoglycan (PG) sacculus. Their lytic action creates space within the PG sacculus to allow for its expansion as well as for the insertion of various structures such as secretion systems and flagella. This Klebsiella pneumoniae subsp. pneumoniae (strain ATCC 700721 / MGH 78578) protein is Membrane-bound lytic murein transglycosylase F.